A 241-amino-acid chain; its full sequence is Fatty acid metabolism regulator protein (241 aa).

One can recognise an HTH gntR-type domain in the interval 11-79 (QSPAALAEEY…HGKPTKVNNI (69 aa)). The segment at residues 39–58 (ERDLADKIGVTRTTLREVLQ) is a DNA-binding region (H-T-H motif).

As to quaternary structure, homodimer.

Its subcellular location is the cytoplasm. In terms of biological role, multifunctional regulator of fatty acid metabolism. This is Fatty acid metabolism regulator protein from Haemophilus influenzae (strain ATCC 51907 / DSM 11121 / KW20 / Rd).